The sequence spans 356 residues: Galactosylgalactosylxylosylprotein 3-beta-glucuronosyltransferase sqv-8 (356 aa).

At 1–9 (MFPSRLLEK) the chain is on the cytoplasmic side. A helical; Signal-anchor for type II membrane protein membrane pass occupies residues 10–30 (WWLRAFIALVIFFVWQLFYAI). At 31–356 (NRVQSLEEER…LEAHALGVDN (326 aa)) the chain is on the lumenal side. N-linked (GlcNAc...) asparagine glycosylation is found at asparagine 93 and asparagine 173. Residue aspartate 208 coordinates Mn(2+). Residues asparagine 246 and asparagine 272 are each glycosylated (N-linked (GlcNAc...) asparagine). The active-site Proton acceptor is the glutamate 294.

It belongs to the glycosyltransferase 43 family.

The protein localises to the membrane. It carries out the reaction 3-O-(beta-D-galactosyl-(1-&gt;3)-beta-D-galactosyl-(1-&gt;4)-beta-D-xylosyl)-L-seryl-[protein] + UDP-alpha-D-glucuronate = 3-O-(beta-D-GlcA-(1-&gt;3)-beta-D-Gal-(1-&gt;3)-beta-D-Gal-(1-&gt;4)-beta-D-Xyl)-L-seryl-[protein] + UDP + H(+). In terms of biological role, glycosyltransferase required for the biosynthesis of the tetrasaccharide (GlcA-Gal-Gal-Xyl-)Ser core linker of heparan sulfate and chondroitin sulfate. May be involved in the biosynthesis of the HNK-1 carbohydrate epitope on glycoproteins. Required for embryonic development. Involved in the elongation of the pharyngeal isthmus during the later stages of embryonic development. Involved in vulval epithelium invagination. The protein is Galactosylgalactosylxylosylprotein 3-beta-glucuronosyltransferase sqv-8 (sqv-8) of Caenorhabditis elegans.